Consider the following 85-residue polypeptide: MKKILFSMFYSILVGEEPDSVFLKKEGKQNQVKMIWIAPSSCAKDLTISEGTGATFLFNFHSRVSICFHALFLRPRNMKWTNSFS.

Belongs to the ycf76 family.

It is found in the plastid. The protein resides in the chloroplast. This is an uncharacterized protein from Saccharum hybrid (Sugarcane).